The chain runs to 557 residues: Proline--tRNA ligase (557 aa).

The protein belongs to the class-II aminoacyl-tRNA synthetase family. ProS type 1 subfamily. As to quaternary structure, homodimer.

The protein resides in the cytoplasm. It catalyses the reaction tRNA(Pro) + L-proline + ATP = L-prolyl-tRNA(Pro) + AMP + diphosphate. In terms of biological role, catalyzes the attachment of proline to tRNA(Pro) in a two-step reaction: proline is first activated by ATP to form Pro-AMP and then transferred to the acceptor end of tRNA(Pro). As ProRS can inadvertently accommodate and process non-cognate amino acids such as alanine and cysteine, to avoid such errors it has two additional distinct editing activities against alanine. One activity is designated as 'pretransfer' editing and involves the tRNA(Pro)-independent hydrolysis of activated Ala-AMP. The other activity is designated 'posttransfer' editing and involves deacylation of mischarged Ala-tRNA(Pro). The misacylated Cys-tRNA(Pro) is not edited by ProRS. The protein is Proline--tRNA ligase of Baumannia cicadellinicola subsp. Homalodisca coagulata.